A 174-amino-acid chain; its full sequence is Protein VdlD (174 aa).

The HotDog ACOT-type domain maps to 20–132; the sequence is DRTKLLMSYL…YFTMVAVENG (113 aa).

Belongs to the acyl coenzyme A hydrolase family.

This chain is Protein VdlD (vdlD), found in Helicobacter pylori (strain J99 / ATCC 700824) (Campylobacter pylori J99).